The primary structure comprises 282 residues: Probable endonuclease 4 (282 aa).

H69, H109, E145, D179, H182, H216, D229, H231, and E261 together coordinate Zn(2+).

It belongs to the AP endonuclease 2 family. Zn(2+) is required as a cofactor.

It catalyses the reaction Endonucleolytic cleavage to 5'-phosphooligonucleotide end-products.. Functionally, endonuclease IV plays a role in DNA repair. It cleaves phosphodiester bonds at apurinic or apyrimidinic (AP) sites, generating a 3'-hydroxyl group and a 5'-terminal sugar phosphate. The protein is Probable endonuclease 4 of Edwardsiella ictaluri (strain 93-146).